A 160-amino-acid polypeptide reads, in one-letter code: UPF0178 protein PLES_56411 (160 aa).

The protein belongs to the UPF0178 family.

The polypeptide is UPF0178 protein PLES_56411 (Pseudomonas aeruginosa (strain LESB58)).